The following is a 343-amino-acid chain: Selenide, water dikinase (343 aa).

Cys15 is an active-site residue. ATP contacts are provided by residues Lys18 and 46-48; that span reads HKD. Asp49 provides a ligand contact to Mg(2+). ATP contacts are provided by residues Asp66, Asp89, and 137–139; that span reads GHS. Asp89 serves as a coordination point for Mg(2+). Asp225 lines the Mg(2+) pocket.

It belongs to the selenophosphate synthase 1 family. Class I subfamily. Homodimer. Mg(2+) serves as cofactor.

It catalyses the reaction hydrogenselenide + ATP + H2O = selenophosphate + AMP + phosphate + 2 H(+). Its function is as follows. Synthesizes selenophosphate from selenide and ATP. This Sulfurimonas denitrificans (strain ATCC 33889 / DSM 1251) (Thiomicrospira denitrificans (strain ATCC 33889 / DSM 1251)) protein is Selenide, water dikinase.